We begin with the raw amino-acid sequence, 696 residues long: Polyribonucleotide nucleotidyltransferase (696 aa).

Asp-483 and Asp-489 together coordinate Mg(2+). The KH domain occupies Pro-550–Ile-609. The 69-residue stretch at Gly-619–Lys-687 folds into the S1 motif domain.

It belongs to the polyribonucleotide nucleotidyltransferase family. It depends on Mg(2+) as a cofactor.

It is found in the cytoplasm. It carries out the reaction RNA(n+1) + phosphate = RNA(n) + a ribonucleoside 5'-diphosphate. Involved in mRNA degradation. Catalyzes the phosphorolysis of single-stranded polyribonucleotides processively in the 3'- to 5'-direction. This Geobacter sp. (strain M21) protein is Polyribonucleotide nucleotidyltransferase.